Here is a 397-residue protein sequence, read N- to C-terminus: Phosphoglycerate kinase (397 aa).

Substrate is bound by residues 23 to 25, R38, 61 to 64, R122, and R155; these read DFN and HMGK. ATP is bound by residues K206, G296, E327, and 353–356; that span reads GGDS.

It belongs to the phosphoglycerate kinase family. As to quaternary structure, monomer.

Its subcellular location is the cytoplasm. It carries out the reaction (2R)-3-phosphoglycerate + ATP = (2R)-3-phospho-glyceroyl phosphate + ADP. The protein operates within carbohydrate degradation; glycolysis; pyruvate from D-glyceraldehyde 3-phosphate: step 2/5. The polypeptide is Phosphoglycerate kinase (Clostridium perfringens (strain ATCC 13124 / DSM 756 / JCM 1290 / NCIMB 6125 / NCTC 8237 / Type A)).